The primary structure comprises 160 residues: Protransforming growth factor alpha (160 aa).

Residues 1–23 (MVPSAGQFALFALGILLAVCQAL) form the signal peptide. A propeptide spans 24-39 (ENSTSALSADPPIAAA) (removed in mature form). Topologically, residues 24 to 98 (ENSTSALSAD…AVVAASQKKQ (75 aa)) are extracellular. Asn25 carries N-linked (GlcNAc...) asparagine glycosylation. One can recognise an EGF-like domain in the interval 43-83 (HFNDCPDSHSQFCFHGTCRFLVQEDKPACVCHSGYVGARCE). 3 disulfide bridges follow: Cys47-Cys60, Cys55-Cys71, and Cys73-Cys82. The propeptide at 90–160 (VVAASQKKQA…TACCHSETVV (71 aa)) is removed in mature form. Residues 99–124 (AITALVVVSIVALAVLIITCVLIHCC) traverse the membrane as a helical segment. The Cytoplasmic segment spans residues 125–160 (QVRKHCEWCRALICRHEKPSALLKGRTACCHSETVV). Residues Cys153 and Cys154 are each lipidated (S-palmitoyl cysteine).

As to quaternary structure, interacts with the PDZ domains of MAGI3, SDCBP and SNTA1. The interaction with SDCBP, is required for the targeting to the cell surface. In the endoplasmic reticulum, in its immature form (i.e. with a prosegment and lacking full N-glycosylation), interacts with CNIH. In the Golgi apparatus, may form a complex with CNIH and GORASP2. Interacts (via cytoplasmic C-terminal domain) with NKD2.

It localises to the secreted. The protein resides in the extracellular space. Its subcellular location is the cell membrane. In terms of biological role, TGF alpha is a mitogenic polypeptide that is able to bind to the EGF receptor/EGFR and to act synergistically with TGF beta to promote anchorage-independent cell proliferation in soft agar. The polypeptide is Protransforming growth factor alpha (TGFA) (Sus scrofa (Pig)).